Reading from the N-terminus, the 290-residue chain is Small ribosomal subunit biogenesis GTPase RsgA (290 aa).

One can recognise a CP-type G domain in the interval 62–213 (KNSLVRPPIV…IADTPGFSSL (152 aa)). GTP is bound by residues 111–114 (SKLD) and 156–164 (GQTGVGKST). 4 residues coordinate Zn(2+): C237, C242, H244, and C250.

Belongs to the TRAFAC class YlqF/YawG GTPase family. RsgA subfamily. As to quaternary structure, monomer. Associates with 30S ribosomal subunit, binds 16S rRNA. It depends on Zn(2+) as a cofactor.

It localises to the cytoplasm. Its function is as follows. One of several proteins that assist in the late maturation steps of the functional core of the 30S ribosomal subunit. Helps release RbfA from mature subunits. May play a role in the assembly of ribosomal proteins into the subunit. Circularly permuted GTPase that catalyzes slow GTP hydrolysis, GTPase activity is stimulated by the 30S ribosomal subunit. The polypeptide is Small ribosomal subunit biogenesis GTPase RsgA (Streptococcus agalactiae serotype III (strain NEM316)).